A 127-amino-acid chain; its full sequence is MARISGVDIPRNKRVEISLTYIYGIGRTTSTEILARTNINPNVRVKDLTEDEVIRLREIIDQDYTVEGDLRRAVQLNIKRLMDIGCYRGIRHRKGLPLRGQRTKTNARTRRGKKGAAIGGKKKATKK.

The tract at residues 95–127 (GLPLRGQRTKTNARTRRGKKGAAIGGKKKATKK) is disordered.

It belongs to the universal ribosomal protein uS13 family. In terms of assembly, part of the 30S ribosomal subunit. Forms a loose heterodimer with protein S19. Forms two bridges to the 50S subunit in the 70S ribosome.

Functionally, located at the top of the head of the 30S subunit, it contacts several helices of the 16S rRNA. In the 70S ribosome it contacts the 23S rRNA (bridge B1a) and protein L5 of the 50S subunit (bridge B1b), connecting the 2 subunits; these bridges are implicated in subunit movement. Contacts the tRNAs in the A and P-sites. The polypeptide is Small ribosomal subunit protein uS13 (Herpetosiphon aurantiacus (strain ATCC 23779 / DSM 785 / 114-95)).